The chain runs to 154 residues: 3-dehydroquinate dehydratase (154 aa).

Tyrosine 26 acts as the Proton acceptor in catalysis. Substrate contacts are provided by asparagine 77, histidine 83, and aspartate 90. Residue histidine 103 is the Proton donor of the active site. Substrate contacts are provided by residues 104–105 and arginine 114; that span reads IS.

It belongs to the type-II 3-dehydroquinase family. As to quaternary structure, homododecamer.

It carries out the reaction 3-dehydroquinate = 3-dehydroshikimate + H2O. Its pathway is metabolic intermediate biosynthesis; chorismate biosynthesis; chorismate from D-erythrose 4-phosphate and phosphoenolpyruvate: step 3/7. In terms of biological role, catalyzes a trans-dehydration via an enolate intermediate. In Buchnera aphidicola subsp. Baizongia pistaciae (strain Bp), this protein is 3-dehydroquinate dehydratase.